Reading from the N-terminus, the 160-residue chain is MGVTKKPDLNDPVLRAKLAKGMGHNYYGEPAWPNDLLYIFPVVILGTIACNVGLAILEPSMIGEPADPFATPLEILPEWYFFPVFQILRTVPNKLLGVLLMASVPLGLFTVPFLENVNKFQNPFRRPVATTVFLIGTAVALWLGIGATLPIDKSLTLGLF.

Transmembrane regions (helical) follow at residues leucine 36–isoleucine 56, leucine 95–glutamate 115, and threonine 131–isoleucine 151.

The protein belongs to the cytochrome b family. PetD subfamily. The 4 large subunits of the cytochrome b6-f complex are cytochrome b6, subunit IV (17 kDa polypeptide, petD), cytochrome f and the Rieske protein, while the 4 small subunits are petG, petL, petM and petN. The complex functions as a dimer.

The protein localises to the plastid. It is found in the chloroplast thylakoid membrane. Its function is as follows. Component of the cytochrome b6-f complex, which mediates electron transfer between photosystem II (PSII) and photosystem I (PSI), cyclic electron flow around PSI, and state transitions. The chain is Cytochrome b6-f complex subunit 4 from Acorus calamus (Sweet flag).